A 186-amino-acid chain; its full sequence is Ribosome-recycling factor (186 aa).

It belongs to the RRF family.

Its subcellular location is the cytoplasm. Responsible for the release of ribosomes from messenger RNA at the termination of protein biosynthesis. May increase the efficiency of translation by recycling ribosomes from one round of translation to another. This Rickettsia akari (strain Hartford) protein is Ribosome-recycling factor.